The following is an 82-amino-acid chain: Mu-conotoxin GVIIJ (82 aa).

The signal sequence occupies residues 1-22 (MKLTCVVIVAALLLTACQLITA). Residues 23–47 (LDCGGTQKHRALRSTIKLSLLRQHR) constitute a propeptide that is removed on maturation. At W49 the chain carries 6'-bromotryptophan. Intrachain disulfides connect C50–C65, C57–C69, and C64–C76. P53 carries the post-translational modification 4-hydroxyproline. C71 provides a ligand contact to a protein.

It belongs to the conotoxin O1 superfamily. In terms of processing, cys-71 is a key residue that tethers to the channel by covalent attachment, leading to nearly irreversible inhibition (k(off) very low). In order to determine the solution structure without dimerization, this residue was mutated to Cys. In terms of tissue distribution, expressed by the venom duct.

Its subcellular location is the secreted. Functionally, mu-conotoxins block voltage-gated sodium channels (Nav). This toxin (GVIIJ(SSG)) blocks Nav1.1/SCN1A (Kd=11 nM), Nav1.2/SCN2A (Kd=11 nM), Nav1.3/SCN3A (Kd=15 nM), Nav1.4/SCN4A (Kd=4.7 nM), Nav1.6/SCN8A (Kd=360 nM) and Nav1.7/SCN9A (Kd=41 nM). It binds the channel at the newly described site 8, which is composed by two surfaces whose one contains a non-disulfide-bonded cysteine (which is free to covalently bind the toxin Cys-71). It is noteworthy that coexpression of subunits beta-2 or beta-4 (but not beta-1 or beta-3) protects rNav1.1-1.7 against block by the toxin, since these subunits (thanks to their extracellular domain) covalently bind to the key cysteine of the channel, thus preventing the covalent binding of the toxin. The chain is Mu-conotoxin GVIIJ from Conus geographus (Geography cone).